A 538-amino-acid chain; its full sequence is Chaperonin GroEL 1 (538 aa).

Residues T29–P32, D86–T90, G413, and D494 contribute to the ATP site.

This sequence belongs to the chaperonin (HSP60) family. Forms a cylinder of 14 subunits composed of two heptameric rings stacked back-to-back. Interacts with the co-chaperonin GroES.

Its subcellular location is the cytoplasm. The enzyme catalyses ATP + H2O + a folded polypeptide = ADP + phosphate + an unfolded polypeptide.. Functionally, together with its co-chaperonin GroES, plays an essential role in assisting protein folding. The GroEL-GroES system forms a nano-cage that allows encapsulation of the non-native substrate proteins and provides a physical environment optimized to promote and accelerate protein folding. The chain is Chaperonin GroEL 1 from Mycobacterium avium (strain 104).